Reading from the N-terminus, the 275-residue chain is Light-independent protochlorophyllide reductase iron-sulfur ATP-binding protein (275 aa).

Residues 12 to 17 (GIGKST) and Lys-41 contribute to the ATP site. Mg(2+) is bound at residue Ser-16. Residues Cys-97 and Cys-131 each coordinate [4Fe-4S] cluster. 182-183 (NR) contributes to the ATP binding site.

This sequence belongs to the NifH/BchL/ChlL family. As to quaternary structure, homodimer. Protochlorophyllide reductase is composed of three subunits; BchL, BchN and BchB. [4Fe-4S] cluster is required as a cofactor.

It carries out the reaction chlorophyllide a + oxidized 2[4Fe-4S]-[ferredoxin] + 2 ADP + 2 phosphate = protochlorophyllide a + reduced 2[4Fe-4S]-[ferredoxin] + 2 ATP + 2 H2O. It participates in porphyrin-containing compound metabolism; bacteriochlorophyll biosynthesis (light-independent). Component of the dark-operative protochlorophyllide reductase (DPOR) that uses Mg-ATP and reduced ferredoxin to reduce ring D of protochlorophyllide (Pchlide) to form chlorophyllide a (Chlide). This reaction is light-independent. The L component serves as a unique electron donor to the NB-component of the complex, and binds Mg-ATP. The chain is Light-independent protochlorophyllide reductase iron-sulfur ATP-binding protein from Chlorobium limicola (strain DSM 245 / NBRC 103803 / 6330).